Here is a 90-residue protein sequence, read N- to C-terminus: Large ribosomal subunit protein bL27 (90 aa).

Residues 1-24 form a disordered region; the sequence is MAHKKGTGSTRNGRDSNSKRLGVK.

The protein belongs to the bacterial ribosomal protein bL27 family.

This Prochlorococcus marinus (strain NATL1A) protein is Large ribosomal subunit protein bL27.